Reading from the N-terminus, the 493-residue chain is Glycosyltransferase alg8 (493 aa).

4 helical membrane-spanning segments follow: residues 13 to 32 (GWLF…PTSI), 47 to 69 (VGIW…LYIV), 380 to 402 (LTVA…LLWI), and 422 to 444 (PAYP…YVFF).

The protein belongs to the glycosyltransferase 2 family.

It is found in the cell membrane. It participates in glycan biosynthesis; alginate biosynthesis. In terms of biological role, possibly a processive enzyme that polymerizes GDP-mannuronic acid. This chain is Glycosyltransferase alg8 (alg8), found in Pseudomonas syringae pv. tomato (strain ATCC BAA-871 / DC3000).